Reading from the N-terminus, the 745-residue chain is Junction plakoglobin (745 aa).

An N-acetylmethionine modification is found at M1. An O-linked (GlcNAc) threonine glycan is attached at T14. Phosphoserine occurs at positions 99 and 125. ARM repeat units follow at residues 132 to 171 (NYQD…QLSK), 172 to 215 (KEAS…LSHH), 216 to 255 (REGL…NLLL), 258 to 297 (EGAK…LLAY), 298 to 341 (GNQE…LSVC), 342 to 381 (PSNK…NLSD), 383 to 420 (ATKQ…NLTC), 423 to 464 (SKNK…HLTS), 470 to 510 (EMAQ…NLAL), 512 to 551 (PANH…QPYT), 574 to 613 (PMNR…ELAQ), and 615 to 661 (KEAA…PDYR). An interaction with DSC1 and DSG1 region spans residues 132–297 (NYQDDAELAT…TTDCLQLLAY (166 aa)). The residue at position 182 (S182) is a Phosphoserine. An interaction with DSC1 region spans residues 574-661 (PMNRMEIFRL…ISEDKNPDYR (88 aa)). 2 positions are modified to phosphoserine: S665 and S730.

This sequence belongs to the beta-catenin family. Homodimer. Component of an E-cadherin/catenin adhesion complex composed of at least E-cadherin/CDH1 and gamma-catenin/JUP, and possibly alpha-catenin/CTNNA1; the complex is located to adherens junctions. The stable association of CTNNA1 is controversial as CTNNA1 was shown not to bind to F-actin when assembled in the complex. Interacts with MUC1. Interacts with CAV1. Interacts with PTPRJ. Interacts with DSG1. Interacts with DSC1 and DSC2. Interacts with PKP2. Interacts with PKP3 (via N-terminus); the interaction is required for PKP3 localization to desmosome cell-cell junctions. Interacts with DSG4. Post-translationally, may be phosphorylated by FER. As to expression, expressed in the heart (at protein level).

Its subcellular location is the cell junction. The protein resides in the adherens junction. It localises to the desmosome. The protein localises to the cytoplasm. It is found in the cytoskeleton. Its subcellular location is the cell membrane. The protein resides in the nucleus. In terms of biological role, common junctional plaque protein. The membrane-associated plaques are architectural elements in an important strategic position to influence the arrangement and function of both the cytoskeleton and the cells within the tissue. The presence of plakoglobin in both the desmosomes and in the intermediate junctions suggests that it plays a central role in the structure and function of submembranous plaques. Acts as a substrate for VE-PTP and is required by it to stimulate VE-cadherin function in endothelial cells. Can replace beta-catenin in E-cadherin/catenin adhesion complexes which are proposed to couple cadherins to the actin cytoskeleton. The chain is Junction plakoglobin from Rattus norvegicus (Rat).